The primary structure comprises 573 residues: Transcription factor E3 (573 aa).

Ser-47 carries the phosphoserine; by MTOR modification. The disordered stretch occupies residues 91–151 (TLSASSSAEG…SPAPASPAIS (61 aa)). A compositionally biased stretch (low complexity) spans 107 to 126 (SSSSSSRVLLRQQLMRAQAQ). The span at 127 to 136 (EQERRERREQ) shows a compositional bias: basic and acidic residues. Over residues 137–151 (ASSFPSPAPASPAIS) the composition is skewed to low complexity. Position 186 is an asymmetric dimethylarginine (Arg-186). The segment at 209–248 (LASQALTPPPGGASVQPLPTPEAAHAPGPTSSAPNSPMAL) is disordered. The interval 258–269 (EIDDVIDEIISL) is strong transcription activation domain. Phosphoserine; by MTOR is present on Ser-319. Residue Lys-337 forms a Glycyl lysine isopeptide (Lys-Gly) (interchain with G-Cter in SUMO2) linkage. A bHLH domain is found at 344 to 397 (QKKDNHNLIERRRRFNINDRIKELGTLIPKSSDPEMRWNKGTILKASVDYIRKL). Residues 354 to 357 (RRRR) carry the Nuclear localization signal motif. The leucine-zipper stretch occupies residues 407-428 (LESRQRSLEQANRSLQLRIQEL). Positions 531–573 (VGGLSGGTLSPLRAASDPLLSSVSPAVSKASSRRSSFSMEEES) are disordered. Residues 537-573 (GTLSPLRAASDPLLSSVSPAVSKASSRRSSFSMEEES) show a composition bias toward low complexity. 6 positions are modified to phosphoserine: Ser-540, Ser-546, Ser-552, Ser-554, Ser-558, and Ser-566.

It belongs to the MiT/TFE family. Homodimer and heterodimer; with TFEB or MITF. Interacts with RRAGC/RagC GDP-bound and RRAGD/RagD GDP-bound; promoting its recruitment to lysosomal membrane in the presence of nutrients. In terms of processing, phosphorylation ar Ser-47 and Ser-319 by MTOR via non-canonical mTORC1 pathway regulates its stability and subcellular location, respectively. When nutrients are present, phosphorylation by MTOR at Ser-47 promotes ubiquitination by the SCF(BTRC) complex, followed by degradation. When nutrients are present, phosphorylation by MTOR at Ser-319 also promotes association with 14-3-3/YWHA adapters and retention in the cytosol. Phosphorylation at Ser-47 plays a more critical role than phosphorylation at Ser-319 for TFE3 inactivation. Inhibition of mTORC1, starvation and lysosomal disruption, promotes dephosphorylation and transcription factor activity. Post-translationally, ubiquitinated by the SCF(BTRC) and SCF(FBXW11) complexes following phosphorylation at Ser-47 by MTOR, leading to its degradation by the proteasome. Sumoylated; does not affect dimerization with MITF.

It localises to the cytoplasm. It is found in the cytosol. Its subcellular location is the nucleus. The protein localises to the lysosome membrane. Transcription factor that acts as a master regulator of lysosomal biogenesis and immune response. Specifically recognizes and binds E-box sequences (5'-CANNTG-3'); efficient DNA-binding requires dimerization with itself or with another MiT/TFE family member such as TFEB or MITF. Involved in the cellular response to amino acid availability by acting downstream of MTOR: in the presence of nutrients, TFE3 phosphorylation by MTOR promotes its inactivation. Upon starvation or lysosomal stress, inhibition of MTOR induces TFE3 dephosphorylation, resulting in transcription factor activity. Specifically recognizes and binds the CLEAR-box sequence (5'-GTCACGTGAC-3') present in the regulatory region of many lysosomal genes, leading to activate their expression, thereby playing a central role in expression of lysosomal genes. Maintains the pluripotent state of embryonic stem cells by promoting the expression of genes such as ESRRB; mTOR-dependent TFE3 cytosolic retention and inactivation promotes exit from pluripotency. Required to maintain the naive pluripotent state of hematopoietic stem cell; mTOR-dependent cytoplasmic retention of TFE3 promotes the exit of hematopoietic stem cell from pluripotency. TFE3 activity is also involved in the inhibition of neuronal progenitor differentiation. Acts as a positive regulator of browning of adipose tissue by promoting expression of target genes; mTOR-dependent phosphorylation promotes cytoplasmic retention of TFE3 and inhibits browning of adipose tissue. In association with TFEB, activates the expression of CD40L in T-cells, thereby playing a role in T-cell-dependent antibody responses in activated CD4(+) T-cells and thymus-dependent humoral immunity. Specifically recognizes the MUE3 box, a subset of E-boxes, present in the immunoglobulin enhancer. It also binds very well to a USF/MLTF site. May regulate lysosomal positioning in response to nutrient deprivation by promoting the expression of PIP4P1. The protein is Transcription factor E3 of Bos taurus (Bovine).